A 285-amino-acid chain; its full sequence is Tropomyosin (285 aa).

Positions methionine 1–aspartate 273 form a coiled coil.

It belongs to the tropomyosin family. As to quaternary structure, homodimer.

In terms of biological role, tropomyosin, in association with the troponin complex, plays a central role in the calcium dependent regulation of muscle contraction. The polypeptide is Tropomyosin (Chironomus kiiensis (Midge)).